Consider the following 147-residue polypeptide: Large ribosomal subunit protein uL13 (147 aa).

Belongs to the universal ribosomal protein uL13 family. In terms of assembly, part of the 50S ribosomal subunit.

Functionally, this protein is one of the early assembly proteins of the 50S ribosomal subunit, although it is not seen to bind rRNA by itself. It is important during the early stages of 50S assembly. This Lactobacillus acidophilus (strain ATCC 700396 / NCK56 / N2 / NCFM) protein is Large ribosomal subunit protein uL13.